The following is a 249-amino-acid chain: Geranylgeranylglyceryl phosphate synthase (249 aa).

Positions 20 and 49 each coordinate Mg(2+). Sn-glycerol 1-phosphate contacts are provided by residues 169-175, 200-201, and 222-223; these read YLDAGSG, GG, and GN.

This sequence belongs to the GGGP/HepGP synthase family. Group II subfamily. As to quaternary structure, homohexamer. Requires Mg(2+) as cofactor.

It carries out the reaction sn-glycerol 1-phosphate + (2E,6E,10E)-geranylgeranyl diphosphate = sn-3-O-(geranylgeranyl)glycerol 1-phosphate + diphosphate. Prenyltransferase that catalyzes the transfer of the geranylgeranyl moiety of geranylgeranyl diphosphate (GGPP) to the C3 hydroxyl of sn-glycerol-1-phosphate (G1P). The sequence is that of Geranylgeranylglyceryl phosphate synthase from Spirosoma linguale (strain ATCC 33905 / DSM 74 / LMG 10896 / Claus 1).